Here is a 246-residue protein sequence, read N- to C-terminus: Proteasome subunit alpha type-6-B (246 aa).

It belongs to the peptidase T1A family. As to quaternary structure, component of the 20S core complex of the 26S proteasome. The 26S proteasome is composed of a core protease (CP), known as the 20S proteasome, capped at one or both ends by the 19S regulatory particle (RP/PA700). The 20S proteasome core is composed of 28 subunits that are arranged in four stacked rings, resulting in a barrel-shaped structure. The two end rings are each formed by seven alpha subunits, and the two central rings are each formed by seven beta subunits. The catalytic chamber with the active sites is on the inside of the barrel.

It localises to the cytoplasm. The protein resides in the nucleus. Its function is as follows. The proteasome is a multicatalytic proteinase complex which is characterized by its ability to cleave peptides with Arg, Phe, Tyr, Leu, and Glu adjacent to the leaving group at neutral or slightly basic pH. The proteasome has an ATP-dependent proteolytic activity. This Arabidopsis thaliana (Mouse-ear cress) protein is Proteasome subunit alpha type-6-B (PAA2).